The primary structure comprises 368 residues: Cobalt-precorrin-5B C(1)-methyltransferase (368 aa).

It belongs to the CbiD family.

The enzyme catalyses Co-precorrin-5B + S-adenosyl-L-methionine = Co-precorrin-6A + S-adenosyl-L-homocysteine. Its pathway is cofactor biosynthesis; adenosylcobalamin biosynthesis; cob(II)yrinate a,c-diamide from sirohydrochlorin (anaerobic route): step 6/10. Functionally, catalyzes the methylation of C-1 in cobalt-precorrin-5B to form cobalt-precorrin-6A. This chain is Cobalt-precorrin-5B C(1)-methyltransferase, found in Synechococcus sp. (strain CC9605).